Here is a 174-residue protein sequence, read N- to C-terminus: Crossover junction endodeoxyribonuclease RuvC (174 aa).

Active-site residues include Asp16, Glu76, and Asp148. 3 residues coordinate Mg(2+): Asp16, Glu76, and Asp148.

It belongs to the RuvC family. Homodimer which binds Holliday junction (HJ) DNA. The HJ becomes 2-fold symmetrical on binding to RuvC with unstacked arms; it has a different conformation from HJ DNA in complex with RuvA. In the full resolvosome a probable DNA-RuvA(4)-RuvB(12)-RuvC(2) complex forms which resolves the HJ. It depends on Mg(2+) as a cofactor.

The protein localises to the cytoplasm. It catalyses the reaction Endonucleolytic cleavage at a junction such as a reciprocal single-stranded crossover between two homologous DNA duplexes (Holliday junction).. Its function is as follows. The RuvA-RuvB-RuvC complex processes Holliday junction (HJ) DNA during genetic recombination and DNA repair. Endonuclease that resolves HJ intermediates. Cleaves cruciform DNA by making single-stranded nicks across the HJ at symmetrical positions within the homologous arms, yielding a 5'-phosphate and a 3'-hydroxyl group; requires a central core of homology in the junction. The consensus cleavage sequence is 5'-(A/T)TT(C/G)-3'. Cleavage occurs on the 3'-side of the TT dinucleotide at the point of strand exchange. HJ branch migration catalyzed by RuvA-RuvB allows RuvC to scan DNA until it finds its consensus sequence, where it cleaves and resolves the cruciform DNA. In Rhodopseudomonas palustris (strain BisA53), this protein is Crossover junction endodeoxyribonuclease RuvC.